A 132-amino-acid polypeptide reads, in one-letter code: Small ribosomal subunit protein uS8 (132 aa).

Belongs to the universal ribosomal protein uS8 family. In terms of assembly, part of the 30S ribosomal subunit. Contacts proteins S5 and S12.

Its function is as follows. One of the primary rRNA binding proteins, it binds directly to 16S rRNA central domain where it helps coordinate assembly of the platform of the 30S subunit. The sequence is that of Small ribosomal subunit protein uS8 from Brucella abortus (strain S19).